Consider the following 418-residue polypeptide: Putative competence-damage inducible protein (418 aa).

It belongs to the CinA family.

This chain is Putative competence-damage inducible protein, found in Streptococcus pneumoniae (strain CGSP14).